Reading from the N-terminus, the 305-residue chain is Tyrosine recombinase XerC (305 aa).

One can recognise a Core-binding (CB) domain in the interval 1–93; the sequence is MVLDGFAAHF…SWRQYCVWLV (93 aa). Positions 114-294 constitute a Tyr recombinase domain; sequence RVPKALPQEW…DFDHIARLYD (181 aa). Catalysis depends on residues Arg-155, Lys-179, His-246, Arg-249, and His-272. Tyr-281 serves as the catalytic O-(3'-phospho-DNA)-tyrosine intermediate.

It belongs to the 'phage' integrase family. XerC subfamily. In terms of assembly, forms a cyclic heterotetrameric complex composed of two molecules of XerC and two molecules of XerD.

It localises to the cytoplasm. Functionally, site-specific tyrosine recombinase, which acts by catalyzing the cutting and rejoining of the recombining DNA molecules. The XerC-XerD complex is essential to convert dimers of the bacterial chromosome into monomers to permit their segregation at cell division. It also contributes to the segregational stability of plasmids. The chain is Tyrosine recombinase XerC from Neisseria meningitidis serogroup C / serotype 2a (strain ATCC 700532 / DSM 15464 / FAM18).